The chain runs to 479 residues: Ribosomal RNA small subunit methyltransferase F (479 aa).

S-adenosyl-L-methionine-binding positions include 125–131, Glu-149, Asp-176, and Asp-194; that span reads AAAPGSK. The Nucleophile role is filled by Cys-247.

The protein belongs to the class I-like SAM-binding methyltransferase superfamily. RsmB/NOP family.

The protein resides in the cytoplasm. It carries out the reaction cytidine(1407) in 16S rRNA + S-adenosyl-L-methionine = 5-methylcytidine(1407) in 16S rRNA + S-adenosyl-L-homocysteine + H(+). Functionally, specifically methylates the cytosine at position 1407 (m5C1407) of 16S rRNA. This is Ribosomal RNA small subunit methyltransferase F from Shigella dysenteriae serotype 1 (strain Sd197).